We begin with the raw amino-acid sequence, 163 residues long: Nucleotide-binding protein BPUM_1028 (163 aa).

This sequence belongs to the YajQ family.

In terms of biological role, nucleotide-binding protein. The chain is Nucleotide-binding protein BPUM_1028 from Bacillus pumilus (strain SAFR-032).